The sequence spans 450 residues: Tubulin alpha chain (450 aa).

GTP-binding residues include Gln11, Glu71, Ser140, Gly144, Thr145, Thr179, Asn206, and Asn228. A Mg(2+)-binding site is contributed by Glu71. The active site involves Glu254.

The protein belongs to the tubulin family. In terms of assembly, dimer of alpha and beta chains. A typical microtubule is a hollow water-filled tube with an outer diameter of 25 nm and an inner diameter of 15 nM. Alpha-beta heterodimers associate head-to-tail to form protofilaments running lengthwise along the microtubule wall with the beta-tubulin subunit facing the microtubule plus end conferring a structural polarity. Microtubules usually have 13 protofilaments but different protofilament numbers can be found in some organisms and specialized cells. Requires Mg(2+) as cofactor.

It is found in the cytoplasm. It localises to the cytoskeleton. It catalyses the reaction GTP + H2O = GDP + phosphate + H(+). Functionally, tubulin is the major constituent of microtubules, a cylinder consisting of laterally associated linear protofilaments composed of alpha- and beta-tubulin heterodimers. Microtubules grow by the addition of GTP-tubulin dimers to the microtubule end, where a stabilizing cap forms. Below the cap, tubulin dimers are in GDP-bound state, owing to GTPase activity of alpha-tubulin. The chain is Tubulin alpha chain from Zymoseptoria tritici (Speckled leaf blotch fungus).